Here is a 114-residue protein sequence, read N- to C-terminus: Putative pterin-4-alpha-carbinolamine dehydratase (114 aa).

It belongs to the pterin-4-alpha-carbinolamine dehydratase family.

The catalysed reaction is (4aS,6R)-4a-hydroxy-L-erythro-5,6,7,8-tetrahydrobiopterin = (6R)-L-erythro-6,7-dihydrobiopterin + H2O. This Pseudoalteromonas translucida (strain TAC 125) protein is Putative pterin-4-alpha-carbinolamine dehydratase.